Reading from the N-terminus, the 705-residue chain is Ribosomal RNA large subunit methyltransferase K/L (705 aa).

Residues 43–154 (VVYRCCLWSR…GEKGILGFDL (112 aa)) enclose the THUMP domain.

Belongs to the methyltransferase superfamily. RlmKL family.

The protein resides in the cytoplasm. The enzyme catalyses guanosine(2445) in 23S rRNA + S-adenosyl-L-methionine = N(2)-methylguanosine(2445) in 23S rRNA + S-adenosyl-L-homocysteine + H(+). It catalyses the reaction guanosine(2069) in 23S rRNA + S-adenosyl-L-methionine = N(2)-methylguanosine(2069) in 23S rRNA + S-adenosyl-L-homocysteine + H(+). Its function is as follows. Specifically methylates the guanine in position 2445 (m2G2445) and the guanine in position 2069 (m7G2069) of 23S rRNA. The polypeptide is Ribosomal RNA large subunit methyltransferase K/L (Aliivibrio fischeri (strain ATCC 700601 / ES114) (Vibrio fischeri)).